We begin with the raw amino-acid sequence, 131 residues long: Small ribosomal subunit protein uS8 (131 aa).

The protein belongs to the universal ribosomal protein uS8 family. In terms of assembly, part of the 30S ribosomal subunit. Contacts proteins S5 and S12.

Functionally, one of the primary rRNA binding proteins, it binds directly to 16S rRNA central domain where it helps coordinate assembly of the platform of the 30S subunit. The polypeptide is Small ribosomal subunit protein uS8 (Legionella pneumophila subsp. pneumophila (strain Philadelphia 1 / ATCC 33152 / DSM 7513)).